The chain runs to 706 residues: MSPFLRIGLSNFDCGSCQSCQGEAVNPYCAVLVKEYVESENGQMYIQKKPTMYPPWDSTFDAHINKGRVMQIIVKGKNVDLISETTVELYSLAERCRKNNGKTEIWLELKPQGRMLMNARYFLEMSDTKDMNEFETEGFFALHQRRGAIKQAKVHHVKCHEFTATFFPQPTFCSVCHEFVWGLNKQGYQCRQCNAAIHKKCIDKVIAKCTGSAINSRETMFHKERFKIDMPHRFKVYNYKSPTFCEHCGTLLWGLARQGLKCDACGMNVHHRCQTKVANLCGINQKLMAEALAMIESTQQARCLRDTEQIFREGPVEIGLPCSIKNEARPPCLPTPGKREPQGISWESPLDEVDKMCHLPEPELNKERPSLQIKLKIEDFILHKMLGKGSFGKVFLAEFKKTNQFFAIKALKKDVVLMDDDVECTMVEKRVLSLAWEHPFLTHMFCTFQTKENLFFVMEYLNGGDLMYHIQSCHKFDLSRATFYAAEIILGLQFLHSKGIVYRDLKLDNILLDKDGHIKIADFGMCKENMLGDAKTNTFCGTPDYIAPEILLGQKYNHSVDWWSFGVLLYEMLIGQSPFHGQDEEELFHSIRMDNPFYPRWLEKEAKDLLVKLFVREPEKRLGVRGDIRQHPLFREINWEELERKEIDPPFRPKVKSPFDCSNFDKEFLNEKPRLSFADRALINSMDQNMFRNFSFMNPGMERLIS.

One can recognise a C2 domain in the interval 1–107 (MSPFLRIGLS…KNNGKTEIWL (107 aa)). Tyr-90 carries the post-translational modification Phosphotyrosine; by LCK. The Phorbol-ester/DAG-type 1 zinc-finger motif lies at 159-209 (CHEFTATFFPQPTFCSVCHEFVWGLNKQGYQCRQCNAAIHKKCIDKVIAKC). Thr-219 carries the post-translational modification Phosphothreonine; by autocatalysis. The Phorbol-ester/DAG-type 2 zinc finger occupies 231-281 (PHRFKVYNYKSPTFCEHCGTLLWGLARQGLKCDACGMNVHHRCQTKVANLC). The residue at position 348 (Ser-348) is a Phosphoserine. The Protein kinase domain maps to 380 to 634 (FILHKMLGKG…RGDIRQHPLF (255 aa)). ATP is bound by residues 386–394 (LGKGSFGKV) and Lys-409. The active-site Proton acceptor is Asp-504. The residue at position 538 (Thr-538) is a Phosphothreonine; by PDPK1. Residues 635–706 (REINWEELER…MNPGMERLIS (72 aa)) form the AGC-kinase C-terminal domain. A phosphoserine mark is found at Ser-676, Ser-685, and Ser-695.

It belongs to the protein kinase superfamily. AGC Ser/Thr protein kinase family. PKC subfamily. Part of a lipid raft complex composed at least of BCL10, CARD11, MALT1 and IKBKB. Interacts with GLRX3 (via N-terminus). Interacts with ECT2. Interacts with CCDC88A/GIV; the interaction leads to phosphorylation of CCDC88A and inhibition of its guanine nucleotide exchange factor activity. Interacts with PRKCH upstream open reading frame 2; the interaction leads to inhibition of kinase activity. Interacts with CD28. It depends on Mg(2+) as a cofactor. Post-translationally, autophosphorylation at Thr-219 is required for targeting to the TCR and cellular function of PRKCQ upon antigen receptor ligation. Following TCR stimulation, phosphorylated at Tyr-90 and Ser-685. As to expression, expressed in skeletal muscle, T-cells, megakaryoblastic cells and platelets.

It localises to the cytoplasm. It is found in the cell membrane. The catalysed reaction is L-seryl-[protein] + ATP = O-phospho-L-seryl-[protein] + ADP + H(+). It catalyses the reaction L-threonyl-[protein] + ATP = O-phospho-L-threonyl-[protein] + ADP + H(+). Its activity is regulated as follows. Novel PKCs (PRKCD, PRKCE, PRKCH and PRKCQ) are calcium-insensitive, but activated by diacylglycerol (DAG) and phosphatidylserine. Three specific sites; Thr-538 (activation loop of the kinase domain), Ser-676 (turn motif) and Ser-695 (hydrophobic region), need to be phosphorylated for its full activation. Inhibited by PRKCH upstream open reading frame 2. In terms of biological role, calcium-independent, phospholipid- and diacylglycerol (DAG)-dependent serine/threonine-protein kinase that mediates non-redundant functions in T-cell receptor (TCR) signaling, including T-cells activation, proliferation, differentiation and survival, by mediating activation of multiple transcription factors such as NF-kappa-B, JUN, NFATC1 and NFATC2. In TCR-CD3/CD28-co-stimulated T-cells, is required for the activation of NF-kappa-B and JUN, which in turn are essential for IL2 production, and participates in the calcium-dependent NFATC1 and NFATC2 transactivation. Mediates the activation of the canonical NF-kappa-B pathway (NFKB1) by direct phosphorylation of CARD11 on several serine residues, inducing CARD11 association with lipid rafts and recruitment of the BCL10-MALT1 complex, which then activates IKK complex, resulting in nuclear translocation and activation of NFKB1. May also play an indirect role in activation of the non-canonical NF-kappa-B (NFKB2) pathway. In the signaling pathway leading to JUN activation, acts by phosphorylating the mediator STK39/SPAK and may not act through MAP kinases signaling. Plays a critical role in TCR/CD28-induced NFATC1 and NFATC2 transactivation by participating in the regulation of reduced inositol 1,4,5-trisphosphate generation and intracellular calcium mobilization. After costimulation of T-cells through CD28 can phosphorylate CBLB and is required for the ubiquitination and subsequent degradation of CBLB, which is a prerequisite for the activation of TCR. During T-cells differentiation, plays an important role in the development of T-helper 2 (Th2) cells following immune and inflammatory responses, and, in the development of inflammatory autoimmune diseases, is necessary for the activation of IL17-producing Th17 cells. May play a minor role in Th1 response. Upon TCR stimulation, mediates T-cell protective survival signal by phosphorylating BAD, thus protecting T-cells from BAD-induced apoptosis, and by up-regulating BCL-X(L)/BCL2L1 levels through NF-kappa-B and JUN pathways. In platelets, regulates signal transduction downstream of the ITGA2B, CD36/GP4, F2R/PAR1 and F2RL3/PAR4 receptors, playing a positive role in 'outside-in' signaling and granule secretion signal transduction. May relay signals from the activated ITGA2B receptor by regulating the uncoupling of WASP and WIPF1, thereby permitting the regulation of actin filament nucleation and branching activity of the Arp2/3 complex. May mediate inhibitory effects of free fatty acids on insulin signaling by phosphorylating IRS1, which in turn blocks IRS1 tyrosine phosphorylation and downstream activation of the PI3K/AKT pathway. Phosphorylates MSN (moesin) in the presence of phosphatidylglycerol or phosphatidylinositol. Phosphorylates PDPK1 at 'Ser-504' and 'Ser-532' and negatively regulates its ability to phosphorylate PKB/AKT1. Phosphorylates CCDC88A/GIV and inhibits its guanine nucleotide exchange factor activity. Phosphorylates and activates LRRK1, which phosphorylates RAB proteins involved in intracellular trafficking. The polypeptide is Protein kinase C theta type (PRKCQ) (Homo sapiens (Human)).